We begin with the raw amino-acid sequence, 435 residues long: CBL-interacting protein kinase 28 (435 aa).

A Protein kinase domain is found at 11 to 265 (YVIGRQLGQG…ISRIKRSAWY (255 aa)). Residues 17–25 (LGQGTFGKV) and Lys-40 each bind ATP. The active-site Proton acceptor is Asp-133. An activation loop region spans residues 151–180 (DFGLSALAESRRQDGLLHTACGTPAYVAPE). Residues 283–329 (CTSEAPFSGPTICISSERNQEPPNLHNLNAFDIISLSTGFDLSGLFG) form the NAF domain. The PPI stretch occupies residues 334-363 (RRESLFTSRKPAAAVLVKLKELAKALNLKV).

The protein belongs to the protein kinase superfamily. CAMK Ser/Thr protein kinase family. SNF1 subfamily. Mn(2+) is required as a cofactor.

The catalysed reaction is L-seryl-[protein] + ATP = O-phospho-L-seryl-[protein] + ADP + H(+). The enzyme catalyses L-threonyl-[protein] + ATP = O-phospho-L-threonyl-[protein] + ADP + H(+). CIPK serine-threonine protein kinases interact with CBL proteins. Binding of a CBL protein to the regulatory NAF domain of CIPK protein lead to the activation of the kinase in a calcium-dependent manner. This Oryza sativa subsp. japonica (Rice) protein is CBL-interacting protein kinase 28 (CIPK28).